The primary structure comprises 182 residues: Large ribosomal subunit protein uL5m (182 aa).

Belongs to the universal ribosomal protein uL5 family.

Its subcellular location is the mitochondrion. In Reclinomonas americana, this protein is Large ribosomal subunit protein uL5m (RPL5).